The primary structure comprises 403 residues: MEFDRMLIRYGELSTKGKNRKQFVTKLAQNVKRAMTDLPEVRIHGERDRMYIILNGADYQLAEERLKPIFGIQSFSPAVRVNLDLEEVKAAALALVQDAHEENGTFKVAARRSHREFPLDSNEINQEIGAHVLQNIEDLTVNVKNPDVKLTIDVRKEGVFLSCRTILGAAGLPVGSSGRAMLMLSGGIDSPVAGYLAQKRGVEIEAVHFHSPPYTSEQAKQKAIDLAAKLAKYSGQVQMHIVPFTEIQEVIKQQIPESVIMTVTRRMMLRITDELRRKRNGLAIVNGESLGQVASQTLESMLAINAVTATPIIRPVVSMDKNEIIQIAQKIDTYNLSVQPFEDCCTIFTPPSPKTKPKLDKIEHYESFTDFDALIAKALDNIETISVNVAETVQVKDEFADLF.

The region spanning 60–165 is the THUMP domain; the sequence is QLAEERLKPI…KEGVFLSCRT (106 aa). ATP-binding positions include 183 to 184, 208 to 209, arginine 265, glycine 287, and glutamine 296; these read ML and HF.

This sequence belongs to the ThiI family.

Its subcellular location is the cytoplasm. It carries out the reaction [ThiI sulfur-carrier protein]-S-sulfanyl-L-cysteine + a uridine in tRNA + 2 reduced [2Fe-2S]-[ferredoxin] + ATP + H(+) = [ThiI sulfur-carrier protein]-L-cysteine + a 4-thiouridine in tRNA + 2 oxidized [2Fe-2S]-[ferredoxin] + AMP + diphosphate. The enzyme catalyses [ThiS sulfur-carrier protein]-C-terminal Gly-Gly-AMP + S-sulfanyl-L-cysteinyl-[cysteine desulfurase] + AH2 = [ThiS sulfur-carrier protein]-C-terminal-Gly-aminoethanethioate + L-cysteinyl-[cysteine desulfurase] + A + AMP + 2 H(+). Its pathway is cofactor biosynthesis; thiamine diphosphate biosynthesis. Catalyzes the ATP-dependent transfer of a sulfur to tRNA to produce 4-thiouridine in position 8 of tRNAs, which functions as a near-UV photosensor. Also catalyzes the transfer of sulfur to the sulfur carrier protein ThiS, forming ThiS-thiocarboxylate. This is a step in the synthesis of thiazole, in the thiamine biosynthesis pathway. The sulfur is donated as persulfide by IscS. The polypeptide is Probable tRNA sulfurtransferase (Listeria monocytogenes serotype 4a (strain HCC23)).